A 301-amino-acid chain; its full sequence is N-acetylmuramic acid 6-phosphate etherase (301 aa).

An SIS domain is found at 55-215 (IADALRAGGR…STISMVALGK (161 aa)). Glutamate 83 (proton donor) is an active-site residue. Residue glutamate 111 is part of the active site.

The protein belongs to the GCKR-like family. MurNAc-6-P etherase subfamily. In terms of assembly, homodimer.

The enzyme catalyses N-acetyl-D-muramate 6-phosphate + H2O = N-acetyl-D-glucosamine 6-phosphate + (R)-lactate. It functions in the pathway amino-sugar metabolism; 1,6-anhydro-N-acetylmuramate degradation. Its pathway is amino-sugar metabolism; N-acetylmuramate degradation. It participates in cell wall biogenesis; peptidoglycan recycling. In terms of biological role, specifically catalyzes the cleavage of the D-lactyl ether substituent of MurNAc 6-phosphate, producing GlcNAc 6-phosphate and D-lactate. Together with AnmK, is also required for the utilization of anhydro-N-acetylmuramic acid (anhMurNAc) either imported from the medium or derived from its own cell wall murein, and thus plays a role in cell wall recycling. The chain is N-acetylmuramic acid 6-phosphate etherase from Burkholderia lata (strain ATCC 17760 / DSM 23089 / LMG 22485 / NCIMB 9086 / R18194 / 383).